The primary structure comprises 689 residues: DNA-directed RNA polymerase subunit beta' (689 aa).

Residues cysteine 76, cysteine 78, cysteine 94, and cysteine 97 each contribute to the Zn(2+) site. Residues aspartate 496, aspartate 498, and aspartate 500 each coordinate Mg(2+).

It belongs to the RNA polymerase beta' chain family. RpoC1 subfamily. In terms of assembly, in plastids the minimal PEP RNA polymerase catalytic core is composed of four subunits: alpha, beta, beta', and beta''. When a (nuclear-encoded) sigma factor is associated with the core the holoenzyme is formed, which can initiate transcription. Mg(2+) serves as cofactor. It depends on Zn(2+) as a cofactor.

The protein localises to the plastid. Its subcellular location is the chloroplast. The catalysed reaction is RNA(n) + a ribonucleoside 5'-triphosphate = RNA(n+1) + diphosphate. Its function is as follows. DNA-dependent RNA polymerase catalyzes the transcription of DNA into RNA using the four ribonucleoside triphosphates as substrates. This chain is DNA-directed RNA polymerase subunit beta', found in Illicium oligandrum (Star anise).